The sequence spans 157 residues: Tripartite terminase subunit 2 (157 aa).

The disordered stretch occupies residues 1–69 (MSWAKQRVPF…DGEDGHALPD (69 aa)). Residues 11 to 27 (LDDDDGEEENDVQDDVD) are compositionally biased toward acidic residues.

It belongs to the herpesviridae TRM2 protein family. As to quaternary structure, associates with TRM1 and TRM3 to form the tripartite terminase complex.

The protein localises to the host nucleus. In terms of biological role, component of the molecular motor that translocates viral genomic DNA in empty capsid during DNA packaging. Forms a tripartite terminase complex together with TRM1 and TRM3 in the host cytoplasm. Once the complex reaches the host nucleus, it interacts with the capsid portal vertex. This portal forms a ring in which genomic DNA is translocated into the capsid. This Homo sapiens (Human) protein is Tripartite terminase subunit 2.